The chain runs to 85 residues: Conotoxin Lv15a (85 aa).

Residues 1-23 form the signal peptide; the sequence is MEKLTVLILVATVLLMIQVLAQS. A propeptide spanning residues 24–49 is cleaved from the precursor; the sequence is GGDKHLKRRPKQYATKRLSALMRGHR. Q50 is subject to Pyrrolidone carboxylic acid.

This sequence belongs to the conotoxin O2 superfamily. Contains 4 disulfide bonds. As to expression, expressed by the venom duct.

Its subcellular location is the secreted. This is Conotoxin Lv15a from Conus lividus (Livid cone).